Here is an 86-residue protein sequence, read N- to C-terminus: MTRFVLFLNCFFLICMVVECKEGYLMGADGCKRSCLTRPGHYCANECSRVKGTDGYCYAWLACYCYNMPNWVKTWDRATNTCGRGK.

The N-terminal stretch at 1 to 20 (MTRFVLFLNCFFLICMVVEC) is a signal peptide. The LCN-type CS-alpha/beta domain maps to 21–83 (KEGYLMGADG…TWDRATNTCG (63 aa)). Intrachain disulfides connect cysteine 31/cysteine 82, cysteine 35/cysteine 57, cysteine 43/cysteine 63, and cysteine 47/cysteine 65. Residue arginine 84 is modified to Arginine amide.

Expressed by the venom gland.

It is found in the secreted. Its function is as follows. Beta toxins bind voltage-independently at site-4 of sodium channels (Nav) and shift the voltage of activation toward more negative potentials thereby affecting sodium channel activation and promoting spontaneous and repetitive firing. This is Toxin Td2 from Tityus discrepans (Venezuelan scorpion).